We begin with the raw amino-acid sequence, 945 residues long: Soluble guanylate cyclase gcy-33 (945 aa).

Position 104 (histidine 104) interacts with heme. Positions 388-413 (SEVLTEMTREISEAKKTARTLLTQMM) form a coiled coil. Residues 437–567 (SIGFIRVCDF…DTVNTASRME (131 aa)) form the Guanylate cyclase domain. Disordered regions lie at residues 639 to 679 (KEAE…LSGS) and 706 to 930 (QDEN…KCED). A compositionally biased stretch (low complexity) spans 661–679 (SLGESIDSSSSRRGSLSGS). Over residues 711–720 (RPPTWSASHS) the composition is skewed to polar residues. Residues 721–731 (QDIRKPRKTES) are compositionally biased toward basic and acidic residues. Positions 732–744 (KITLNSRLSSSDL) are enriched in polar residues. Composition is skewed to basic and acidic residues over residues 750-759 (ETSKDSDGET) and 766-804 (ELKE…DHVS). Positions 763-802 (TSSELKEVNRIREEALAQEKEEERTTKEENQKIEEVGEDH) form a coiled coil. The segment covering 817 to 828 (GDNNISFSQMPS) has biased composition (polar residues). Basic and acidic residues predominate over residues 851-861 (ISKKKLEKEDS). The segment covering 862-884 (NSSMSSLDERTTVSAKPTTTRRL) has biased composition (polar residues). The span at 886–896 (NQKDLEKEKKR) shows a compositional bias: basic and acidic residues. Residues 898–911 (SMAGSSVTSSSAHS) show a composition bias toward low complexity. The span at 916 to 930 (SKKDTRDKSRCKCED) shows a compositional bias: basic and acidic residues.

Belongs to the adenylyl cyclase class-4/guanylyl cyclase family. In terms of assembly, heterodimer; with other soluble guanylate cyclases. Heme serves as cofactor. Expressed in BAG sensory neuron.

It is found in the cytoplasm. It carries out the reaction GTP = 3',5'-cyclic GMP + diphosphate. With respect to regulation, may be regulated by molecular oxygen. Probably not activated by nitric oxide (NO). In terms of biological role, synthesizes cyclic GMP (cGMP) from GTP. May be involved in sensitivity to quinine by regulating egl-4 activity through the production of cGMP. The polypeptide is Soluble guanylate cyclase gcy-33 (gcy-33) (Caenorhabditis elegans).